Reading from the N-terminus, the 498-residue chain is MQRIIGTEVEYGISSPSDPTANPILTSTQAVLAYAAAAGIQRAKRTRWDYEVESPLRDARGFDLSRSSGPPPIVDADEVGAANMILTNGARLYVDHAHPEYSAPECTDPMDAVIWDKAGERVMEAAARHVASVPGAAKLQLYKNNVDGKGASYGSHENYLMSRQTPFSAVIAGLTPFMVSRQVVTGSGRVGIGPSGDEPGFQLSQRADYIEVEVGLETTLKRGIINTRDEPHADADKYRRLHVIIGDANLAETSTYLKLGTTSLVLDLIEEGVDLSDLALARPVHAVHVISRDPSLRATVALADGRELTALALQRIYLDRVAKLVDSRDPDPRASHVIETWANVLDLLERDPMECAEILDWPAKLRLLEGFRQRENLTWQAPRLHLVDLQYSDVRLDKGLYNRLVARGSMKRLVTEQQVLDAVENPPTDTRAYFRGECLRRFGADIAAASWDSVIFDLGGDSLVRIPTLEPLRGSKAHVGALLDSVDSAVELVEQLTN.

6–10 (GTEVE) serves as a coordination point for ATP. Mg(2+) is bound by residues glutamate 8 and tyrosine 93. Aspartate 95 serves as the catalytic Proton acceptor. Glutamate 100 provides a ligand contact to Mg(2+). Residue 102–103 (SA) coordinates ATP. Histidine 156 is a binding site for Mg(2+). Residues asparagine 158 and arginine 240 each coordinate ATP. Mg(2+) is bound at residue histidine 242.

The protein belongs to the Pup ligase/Pup deamidase family. Pup deamidase subfamily. Requires ATP as cofactor.

The enzyme catalyses [prokaryotic ubiquitin-like protein]-C-terminal-L-glutamine + H2O = [prokaryotic ubiquitin-like protein]-C-terminal-L-glutamate + NH4(+). It functions in the pathway protein degradation; proteasomal Pup-dependent pathway. Specifically catalyzes the deamidation of the C-terminal glutamine of the prokaryotic ubiquitin-like protein Pup to glutamate, thereby rendering Pup competent for conjugation. Probably also displays depupylase (DPUP) activity, removing conjugated Pup from target proteins; thus may be involved in the recycling of Pup and may function similarly to deubiquitinases (DUBs) in eukaryotes to prevent or promote proteasomal degradation of certain proteins. The chain is Pup deamidase/depupylase (dop) from Mycolicibacterium smegmatis (strain ATCC 700084 / mc(2)155) (Mycobacterium smegmatis).